We begin with the raw amino-acid sequence, 101 residues long: Small ribosomal subunit protein uS14A (101 aa).

Residues 47–66 form a disordered region; the sequence is ALASLPRDSNPNRVTNRCAL.

This sequence belongs to the universal ribosomal protein uS14 family. Part of the 30S ribosomal subunit. Contacts proteins S3 and S10.

Binds 16S rRNA, required for the assembly of 30S particles and may also be responsible for determining the conformation of the 16S rRNA at the A site. The chain is Small ribosomal subunit protein uS14A from Myxococcus xanthus (strain DK1622).